Here is a 318-residue protein sequence, read N- to C-terminus: MMHRNQTVVTEFFFTGLTSSFHLQIVLFLTFLCVYLATLLGNLGMIILIHLDTRLHIPMYFFLSHLSFVDACSSSVISPKMLSDMFVDKKVISFLGCAIQLCLFSQFVVTECFLLASMAYDRYVAICKPLLYTLIMSQRVCVQLVIGPYSIGFVSTMVHIISAFVLPYCGPNLINHFFCDLLPVLSLACANTQMKKRLLFIVAGILGVFSGIIILVSYVYIAITILKISSADGRRKAFSTCSSHLTAVSILYGTLFFIYVRPSSSFSLDINKVVSLFYTTVIPMLNPFIYSLRNKEVKDALIRTFEKQFCYSFQDKIL.

The Extracellular segment spans residues 1–28 (MMHRNQTVVTEFFFTGLTSSFHLQIVLF). Residue Asn-5 is glycosylated (N-linked (GlcNAc...) asparagine). Residues 29 to 49 (LTFLCVYLATLLGNLGMIILI) traverse the membrane as a helical segment. Over 50-56 (HLDTRLH) the chain is Cytoplasmic. Residues 57 to 77 (IPMYFFLSHLSFVDACSSSVI) form a helical membrane-spanning segment. Residues 78-93 (SPKMLSDMFVDKKVIS) lie on the Extracellular side of the membrane. Residues 94–114 (FLGCAIQLCLFSQFVVTECFL) traverse the membrane as a helical segment. A disulfide bond links Cys-97 and Cys-189. Residues 115–144 (LASMAYDRYVAICKPLLYTLIMSQRVCVQL) are Cytoplasmic-facing. Residues 145-165 (VIGPYSIGFVSTMVHIISAFV) form a helical membrane-spanning segment. Topologically, residues 166-198 (LPYCGPNLINHFFCDLLPVLSLACANTQMKKRL) are extracellular. A helical membrane pass occupies residues 199–219 (LFIVAGILGVFSGIIILVSYV). Residues 220 to 239 (YIAITILKISSADGRRKAFS) lie on the Cytoplasmic side of the membrane. A helical membrane pass occupies residues 240 to 260 (TCSSHLTAVSILYGTLFFIYV). Residues 261-271 (RPSSSFSLDIN) lie on the Extracellular side of the membrane. The chain crosses the membrane as a helical span at residues 272-292 (KVVSLFYTTVIPMLNPFIYSL). Residues 293 to 318 (RNKEVKDALIRTFEKQFCYSFQDKIL) lie on the Cytoplasmic side of the membrane.

Belongs to the G-protein coupled receptor 1 family.

The protein resides in the cell membrane. Its function is as follows. Potential odorant receptor. In Mus musculus (Mouse), this protein is Olfactory receptor 5G26.